Here is a 131-residue protein sequence, read N- to C-terminus: Transcription antitermination protein NusB (131 aa).

It belongs to the NusB family.

Involved in transcription antitermination. Required for transcription of ribosomal RNA (rRNA) genes. Binds specifically to the boxA antiterminator sequence of the ribosomal RNA (rrn) operons. In Aliarcobacter butzleri (strain RM4018) (Arcobacter butzleri), this protein is Transcription antitermination protein NusB.